The sequence spans 118 residues: Large ribosomal subunit protein uL24c (118 aa).

Belongs to the universal ribosomal protein uL24 family. As to quaternary structure, part of the 50S ribosomal subunit.

It is found in the plastid. It localises to the organellar chromatophore. One of two assembly initiator proteins, it binds directly to the 5'-end of the 23S rRNA, where it nucleates assembly of the 50S subunit. The sequence is that of Large ribosomal subunit protein uL24c (rpl24) from Paulinella chromatophora.